The following is a 430-amino-acid chain: Adenylosuccinate synthetase (430 aa).

Residues 12-18 (GDEGKGK) and 40-42 (GHT) contribute to the GTP site. Asp-13 functions as the Proton acceptor in the catalytic mechanism. Mg(2+)-binding residues include Asp-13 and Gly-40. IMP is bound by residues 13–16 (DEGK), 38–41 (NAGH), Thr-130, Arg-144, Gln-224, Thr-239, and Arg-303. Residue His-41 is the Proton donor of the active site. Position 299–305 (299–305 (TVTGRKR)) interacts with substrate. Residues Arg-305, 331–333 (KLD), and 413–415 (STS) contribute to the GTP site.

It belongs to the adenylosuccinate synthetase family. Homodimer. Mg(2+) serves as cofactor.

It is found in the cytoplasm. The catalysed reaction is IMP + L-aspartate + GTP = N(6)-(1,2-dicarboxyethyl)-AMP + GDP + phosphate + 2 H(+). Its pathway is purine metabolism; AMP biosynthesis via de novo pathway; AMP from IMP: step 1/2. Its function is as follows. Plays an important role in the de novo pathway of purine nucleotide biosynthesis. Catalyzes the first committed step in the biosynthesis of AMP from IMP. This Cereibacter sphaeroides (strain ATCC 17029 / ATH 2.4.9) (Rhodobacter sphaeroides) protein is Adenylosuccinate synthetase.